The sequence spans 57 residues: uncharacterized protein (57 aa).

This is an uncharacterized protein from Archaeoglobus fulgidus (strain ATCC 49558 / DSM 4304 / JCM 9628 / NBRC 100126 / VC-16).